The chain runs to 330 residues: Putative [LysW]-L-2-aminoadipate/[LysW]-L-glutamate phosphate reductase (330 aa).

Residues 10-13 (SGYI) and 34-36 (SRK) each bind NADP(+). The active site involves Cys-142. Asn-297 is an NADP(+) binding site.

It belongs to the NAGSA dehydrogenase family. Type 1 subfamily. LysY sub-subfamily.

Its subcellular location is the cytoplasm. It catalyses the reaction [amino-group carrier protein]-C-terminal-N-(1-carboxy-5-oxopentan-1-yl)-L-glutamine + phosphate + NADP(+) = [amino-group carrier protein]-C-terminal-N-(1-carboxy-5-phosphooxy-5-oxopentan-1-yl)-L-glutamine + NADPH + H(+). The enzyme catalyses [amino-group carrier protein]-C-terminal-gamma-(L-glutamyl-5-semialdehyde)-L-glutamate + phosphate + NADP(+) = [amino-group carrier protein]-C-terminal-gamma-(5-phospho-L-glutamyl)-L-glutamate + NADPH + H(+). It functions in the pathway amino-acid biosynthesis; L-lysine biosynthesis via AAA pathway; L-lysine from L-alpha-aminoadipate (Thermus route): step 3/5. Its pathway is amino-acid biosynthesis; L-arginine biosynthesis. Involved in both the arginine and lysine biosynthetic pathways. The polypeptide is Putative [LysW]-L-2-aminoadipate/[LysW]-L-glutamate phosphate reductase (Pyrococcus abyssi (strain GE5 / Orsay)).